The chain runs to 174 residues: Elongation factor Tu, mitochondrial (174 aa).

62–66 (DCPGH) serves as a coordination point for GTP. N6-succinyllysine is present on Lys78. At Thr103 the chain carries Phosphothreonine. Residue Ser121 is modified to Phosphoserine. Lys161 carries the N6-acetyllysine modification.

Belongs to the GTP-binding elongation factor family. EF-Tu/EF-1A subfamily.

The protein localises to the mitochondrion. The catalysed reaction is GTP + H2O = GDP + phosphate + H(+). Functionally, GTP hydrolase that promotes the GTP-dependent binding of aminoacyl-tRNA to the A-site of ribosomes during protein biosynthesis. This chain is Elongation factor Tu, mitochondrial, found in Mesocricetus auratus (Golden hamster).